The following is a 120-amino-acid chain: Eukaryotic translation initiation factor 4E-binding protein 2 (120 aa).

2 positions are modified to phosphothreonine; by MTOR: Thr37 and Thr46. The short motif at 54–60 (YDRKFLL) is the YXXXXLphi motif element. A Phosphoserine; by MTOR modification is found at Ser65. Position 70 is a phosphothreonine; by MTOR (Thr70). Phosphoserine is present on Ser83. A deamidated asparagine mark is found at Asn99 and Asn102. The TOS motif signature appears at 116–120 (FEMDI).

Belongs to the eIF4E-binding protein family. As to quaternary structure, hypophosphorylated EIF4EBP2 interacts with EIF4E; phosphorylation of EIF4EBP2 by mTORC1 causes dissociation of the complex allowing EIF4G1/EIF4G3 to bind and consequent initiation of translation. Interacts (via TOS motif) with RPTOR; promoting phosphorylation by mTORC1. Interacts with PCMT1; required to prevent isoaspartate accumulation and convert isoaspartate to Asp. Post-translationally, phosphorylation at Thr-37, Thr-46, Ser-65, Thr-70 and Ser-83 is mediated by MTOR and corresponds to the hyperphosphorylated form: it abolishes binding to EIF4E by inducing folding of intrinsically disordered regions. First phosphorylated at Thr-37 and Thr-46 by MTOR, inducing folding of region encompassing residues from Pro-18 to Arg-62 of into a four-stranded beta-domain that sequesters the helical YXXXXLPhi motif into a partly buried beta-strand, blocking accessibility to EIF4E. Protein phosphorylated at Thr-37 and Thr-46 is however unstable and subsequent phosphorylation at Ser-65, Thr-70 and Ser-83 is required to stabilize the fold, decreasing affinity for EIF4E by a factor of 4000. Phosphorylated in response to insulin, EGF and PDGF. Deamidated at Asn-99 and Asn-102 to aspartate (Asp) in brain. Deamidation promotes interaction with RPTOR, subsequent phosphorylation by mTORC1 and increased translation, leading to impair kinetics of excitatory synaptic transmission. Deamidation takes place during postnatal development, when the PI3K-Akt-mTOR signaling is reduced, suggesting it acts as a compensatory mechanism to promote translation despite attenuated PI3K-Akt-mTOR signaling in neuron development. Deamidation converts Asn residues into a mixture of Asp and isoaspartate; interactions with PCMT1 is required to prevent isoaspartate accumulation and convert isoaspartate to Asp. As to expression, enriched in brain.

The protein localises to the cytoplasm. The protein resides in the nucleus. Repressor of translation initiation involved in synaptic plasticity, learning and memory formation. Regulates EIF4E activity by preventing its assembly into the eIF4F complex: hypophosphorylated form of EIF4EBP2 competes with EIF4G1/EIF4G3 and strongly binds to EIF4E, leading to repress translation. In contrast, hyperphosphorylated form dissociates from EIF4E, allowing interaction between EIF4G1/EIF4G3 and EIF4E, leading to initiation of translation. EIF4EBP2 is enriched in brain and acts as a regulator of synapse activity and neuronal stem cell renewal via its ability to repress translation initiation. Mediates the regulation of protein translation by hormones, growth factors and other stimuli that signal through the MAP kinase and mTORC1 pathways. This is Eukaryotic translation initiation factor 4E-binding protein 2 from Mus musculus (Mouse).